Here is a 319-residue protein sequence, read N- to C-terminus: Ciliary microtubule inner protein 2A (319 aa).

It belongs to the CIMIP2 family. As to quaternary structure, microtubule inner protein component of sperm flagellar doublet microtubules.

It is found in the cytoplasm. Its subcellular location is the cytoskeleton. It localises to the flagellum axoneme. In terms of biological role, microtubule inner protein (MIP) part of the dynein-decorated doublet microtubules (DMTs) in flagellum axoneme. Binds to the intra-tubulin interfaces. The chain is Ciliary microtubule inner protein 2A (Cimip2a) from Mus musculus (Mouse).